We begin with the raw amino-acid sequence, 115 residues long: NADH-ubiquinone oxidoreductase chain 3 (115 aa).

3 helical membrane-spanning segments follow: residues Leu3 to Trp23, Phe55 to Leu75, and Thr86 to Trp106.

It belongs to the complex I subunit 3 family. As to quaternary structure, core subunit of respiratory chain NADH dehydrogenase (Complex I) which is composed of 45 different subunits. Interacts with TMEM186. Interacts with TMEM242.

The protein localises to the mitochondrion inner membrane. It carries out the reaction a ubiquinone + NADH + 5 H(+)(in) = a ubiquinol + NAD(+) + 4 H(+)(out). Core subunit of the mitochondrial membrane respiratory chain NADH dehydrogenase (Complex I) which catalyzes electron transfer from NADH through the respiratory chain, using ubiquinone as an electron acceptor. Essential for the catalytic activity of complex I. This chain is NADH-ubiquinone oxidoreductase chain 3, found in Rattus norvegicus (Rat).